Here is a 388-residue protein sequence, read N- to C-terminus: tRNA (guanine(26)-N(2))-dimethyltransferase (388 aa).

Residues 4–383 enclose the Trm1 methyltransferase domain; sequence RTIVEGTTKI…APIAEIKKII (380 aa). Residues Arg41, Arg78, Asp94, and Ala123 each coordinate S-adenosyl-L-methionine. Positions 251, 254, 271, and 274 each coordinate Zn(2+).

This sequence belongs to the class I-like SAM-binding methyltransferase superfamily. Trm1 family.

It catalyses the reaction guanosine(26) in tRNA + 2 S-adenosyl-L-methionine = N(2)-dimethylguanosine(26) in tRNA + 2 S-adenosyl-L-homocysteine + 2 H(+). Dimethylates a single guanine residue at position 26 of a number of tRNAs using S-adenosyl-L-methionine as donor of the methyl groups. The protein is tRNA (guanine(26)-N(2))-dimethyltransferase of Methanosarcina mazei (strain ATCC BAA-159 / DSM 3647 / Goe1 / Go1 / JCM 11833 / OCM 88) (Methanosarcina frisia).